A 1005-amino-acid polypeptide reads, in one-letter code: Probable histidine kinase 4 (1005 aa).

Residues 1–37 (MGVGGGGGGGGGEAAAAVAVEGDEAGKGRRWWRVKVK) lie on the Cytoplasmic side of the membrane. The chain crosses the membrane as a helical span at residues 38–58 (LSTVAVVAWVLASAALWAGLH). The Extracellular portion of the chain corresponds to 59-333 (WRFRRAALHK…YRNKLHVSWS (275 aa)). The region spanning 110-321 (HPPALDQDTF…GDPLRKHQMV (212 aa)) is the CHASE domain. Residues 334-354 (AITTPSGVFVICMLVGYIIYA) form a helical membrane-spanning segment. Residues 355 to 1005 (AWSRYDNVKE…QKFLGPCVSS (651 aa)) are Cytoplasmic-facing. In terms of domain architecture, Histidine kinase spans 389–675 (TVSHEIRTPM…TFTFTAVLRR (287 aa)). Phosphohistidine; by autocatalysis is present on His-392. Response regulatory domains are found at residues 700–829 (SALL…FQAL) and 862–999 (NILV…QKFL). Asp-912 bears the 4-aspartylphosphate mark.

Post-translationally, activation probably requires a transfer of a phosphate group between a His in the transmitter domain and an Asp of the receiver domain. Highly expressed in young leaves and spikelets, and at lower levels in roots, mature leaves and stems.

Its subcellular location is the cell membrane. It carries out the reaction ATP + protein L-histidine = ADP + protein N-phospho-L-histidine.. Cytokinin receptor related to bacterial two-component regulators. Functions as a histidine kinase and transmits the stress signal to a downstream MAPK cascade. This chain is Probable histidine kinase 4, found in Oryza sativa subsp. japonica (Rice).